We begin with the raw amino-acid sequence, 357 residues long: UDP-N-acetylglucosamine--N-acetylmuramyl-(pentapeptide) pyrophosphoryl-undecaprenol N-acetylglucosamine transferase (357 aa).

Residues 11–13 (TGG), asparagine 120, arginine 161, serine 188, and glutamine 281 each bind UDP-N-acetyl-alpha-D-glucosamine.

The protein belongs to the glycosyltransferase 28 family. MurG subfamily.

The protein resides in the cell inner membrane. It carries out the reaction di-trans,octa-cis-undecaprenyl diphospho-N-acetyl-alpha-D-muramoyl-L-alanyl-D-glutamyl-meso-2,6-diaminopimeloyl-D-alanyl-D-alanine + UDP-N-acetyl-alpha-D-glucosamine = di-trans,octa-cis-undecaprenyl diphospho-[N-acetyl-alpha-D-glucosaminyl-(1-&gt;4)]-N-acetyl-alpha-D-muramoyl-L-alanyl-D-glutamyl-meso-2,6-diaminopimeloyl-D-alanyl-D-alanine + UDP + H(+). The protein operates within cell wall biogenesis; peptidoglycan biosynthesis. Functionally, cell wall formation. Catalyzes the transfer of a GlcNAc subunit on undecaprenyl-pyrophosphoryl-MurNAc-pentapeptide (lipid intermediate I) to form undecaprenyl-pyrophosphoryl-MurNAc-(pentapeptide)GlcNAc (lipid intermediate II). The chain is UDP-N-acetylglucosamine--N-acetylmuramyl-(pentapeptide) pyrophosphoryl-undecaprenol N-acetylglucosamine transferase from Prochlorococcus marinus (strain SARG / CCMP1375 / SS120).